Here is a 295-residue protein sequence, read N- to C-terminus: Light-independent protochlorophyllide reductase iron-sulfur ATP-binding protein (295 aa).

ATP is bound by residues 39 to 44 (GIGKST) and Lys68. Ser43 is a binding site for Mg(2+). Positions 124 and 158 each coordinate [4Fe-4S] cluster. 209-210 (NR) is an ATP binding site.

This sequence belongs to the NifH/BchL/ChlL family. As to quaternary structure, homodimer. Protochlorophyllide reductase is composed of three subunits; ChlL, ChlN and ChlB. [4Fe-4S] cluster serves as cofactor.

It carries out the reaction chlorophyllide a + oxidized 2[4Fe-4S]-[ferredoxin] + 2 ADP + 2 phosphate = protochlorophyllide a + reduced 2[4Fe-4S]-[ferredoxin] + 2 ATP + 2 H2O. Its pathway is porphyrin-containing compound metabolism; chlorophyll biosynthesis (light-independent). Its function is as follows. Component of the dark-operative protochlorophyllide reductase (DPOR) that uses Mg-ATP and reduced ferredoxin to reduce ring D of protochlorophyllide (Pchlide) to form chlorophyllide a (Chlide). This reaction is light-independent. The L component serves as a unique electron donor to the NB-component of the complex, and binds Mg-ATP. The polypeptide is Light-independent protochlorophyllide reductase iron-sulfur ATP-binding protein (Prochlorococcus marinus (strain MIT 9301)).